The primary structure comprises 332 residues: Capsular polysaccharide phosphotransferase WcwK (332 aa).

This sequence belongs to the stealth family.

This Streptococcus pneumoniae protein is Capsular polysaccharide phosphotransferase WcwK (wcwK).